A 282-amino-acid chain; its full sequence is Nucleotide-binding protein XCC2806 (282 aa).

5 to 12 (GLSGSGKS) serves as a coordination point for ATP. GTP is bound at residue 57 to 60 (DVRS).

Belongs to the RapZ-like family.

In terms of biological role, displays ATPase and GTPase activities. This chain is Nucleotide-binding protein XCC2806, found in Xanthomonas campestris pv. campestris (strain ATCC 33913 / DSM 3586 / NCPPB 528 / LMG 568 / P 25).